Consider the following 451-residue polypeptide: Enolase (451 aa).

Residue glutamine 163 coordinates (2R)-2-phosphoglycerate. Glutamate 205 (proton donor) is an active-site residue. Aspartate 258, glutamate 308, and aspartate 335 together coordinate Mg(2+). (2R)-2-phosphoglycerate-binding residues include lysine 360, arginine 389, serine 390, and lysine 411. Lysine 360 serves as the catalytic Proton acceptor.

The protein belongs to the enolase family. Requires Mg(2+) as cofactor.

It is found in the cytoplasm. Its subcellular location is the secreted. It localises to the cell surface. The catalysed reaction is (2R)-2-phosphoglycerate = phosphoenolpyruvate + H2O. The protein operates within carbohydrate degradation; glycolysis; pyruvate from D-glyceraldehyde 3-phosphate: step 4/5. Catalyzes the reversible conversion of 2-phosphoglycerate (2-PG) into phosphoenolpyruvate (PEP). It is essential for the degradation of carbohydrates via glycolysis. This is Enolase from Mycoplasma mycoides subsp. mycoides SC (strain CCUG 32753 / NCTC 10114 / PG1).